A 436-amino-acid polypeptide reads, in one-letter code: GTPase Der (436 aa).

2 EngA-type G domains span residues 4-167 and 176-351; these read PIVA…DEET and IRLS…ENHK. Residues 10-17, 57-61, 119-122, 182-189, 229-233, and 294-297 each bind GTP; these read GRPNVGKS, DTGGI, NKVD, DTAGM, and NKWD. Residues 352 to 436 enclose the KH-like domain; the sequence is KRVQSSTLNE…PIHIIPRRRN (85 aa).

Belongs to the TRAFAC class TrmE-Era-EngA-EngB-Septin-like GTPase superfamily. EngA (Der) GTPase family. In terms of assembly, associates with the 50S ribosomal subunit.

Functionally, GTPase that plays an essential role in the late steps of ribosome biogenesis. This chain is GTPase Der, found in Staphylococcus haemolyticus (strain JCSC1435).